Here is a 215-residue protein sequence, read N- to C-terminus: T-complex protein 10A homolog 1 (215 aa).

Residues 1-25 form a disordered region; sequence MLAGQLEARDPKEGTHPEDPCPGAG. The segment covering 7-19 has biased composition (basic and acidic residues); the sequence is EARDPKEGTHPED. Positions 69 to 110 form a coiled coil; that stretch reads ADVHGKLRSHIDALREQNMELREKLRALQLQRWKARKKSAAS. Residues 75–96 form a leucine-zipper region; it reads LRSHIDALREQNMELREKLRAL. Residues 150-163 show a composition bias toward polar residues; that stretch reads ATLLGQRSSSNNSA. The interval 150–215 is disordered; it reads ATLLGQRSSS…TPCAERRGGV (66 aa).

The protein belongs to the TCP10 family. In terms of assembly, self-associates (via leucine zipper). Interacts (via leucine zipper) with ZIPK/DAPK3 (via leucine zipper). Interacts with MAD4. As to expression, expressed in liver and testis. Expressed in the seminiferous tubules (at protein level).

The protein localises to the nucleus. May be involved in transcriptional regulation. Has in vitro transcription inhibition activity. Acts as a tumor suppressor in hepatocellular carcinoma (HCC) cells. This is T-complex protein 10A homolog 1 (TCP10L) from Homo sapiens (Human).